The primary structure comprises 533 residues: Flavin-dependent halogenase gsfI (533 aa).

The FAD site is built by glycine 14, glycine 17, and glutamate 47. Positions 331 and 332 each coordinate chloride.

It belongs to the flavin-dependent halogenase family.

It carries out the reaction griseophenone C + FADH2 + chloride + O2 = griseophenone B + FAD + 2 H2O + H(+). Its pathway is secondary metabolite biosynthesis; terpenoid biosynthesis. Functionally, flavin-dependent halogenase; part of the gene cluster that mediates the biosynthesis of griseofulvin, an important antifungal drug that has been in use for a long time for treating dermatophyte infections. The first step of the pathway is the formation of the heptaketide backbone by gsfA which is initiated by priming with acetyl-CoA, followed by sequential condensations of 6 malonyl-CoA units. The resulting benzophenone can undergo a spontaneous dehydration to form norlichexanthone. However, the true precursor for the griseofulvin biosynthesis is not norlichexanthone, but the heptaketide benzophenone that is O-methylated at 3-OH by gsfB to produce griseophenone D which is further methylated at 9-OH by gsfC to yield griseophenone C. Griseophenone C is then substrate of halogenase gsfI which is responsible for the regio-specific chlorination at the C13 position to form griseophenone B. The cytochrome P450 gsfF catalyzes the coupling of orcinol and phloroglucinol rings in griseophenone B to form desmethyl-dehydrogriseofulvin A which is further methylated at 5-OH by gsfD to yield dehydrogriseofulvin. Finally, gsfE performs stereospecific reduction of enone 18 of dehydrogriseofulvin to afford the final product griseofulvin. This is Flavin-dependent halogenase gsfI from Penicillium aethiopicum.